Here is a 2909-residue protein sequence, read N- to C-terminus: Micronemal protein 15 (2909 aa).

The N-terminal stretch at 1–29 (MVFRATREPFRLPLVAAFIALFLLKGVTC) is a signal peptide. 11 N-linked (GlcNAc...) asparagine glycosylation sites follow: N512, N563, N792, N813, N986, N1007, N1057, N1142, N1319, N1395, and N1713. The region spanning 1755–1811 (TAIVGEWGEWSACTGTCFSQWWTPKRTRTRLVLAELSHSQIPSVSETATCLDLPPCG) is the TSP type-1 1 domain. The tract at residues 1937 to 2073 (RRKGIMSRRR…RSQARNQTPD (137 aa)) is disordered. Over residues 1967–1977 (SEQSGKASQNG) the composition is skewed to polar residues. N-linked (GlcNAc...) asparagine glycosylation occurs at N1976. The segment covering 1978 to 1988 (SRRHRASRKQK) has biased composition (basic residues). The span at 2004 to 2016 (GESTLHGTGTNAY) shows a compositional bias: polar residues. The span at 2049-2065 (KARRARRGAGRFRKSRS) shows a compositional bias: basic residues. N-linked (GlcNAc...) asparagine glycosylation occurs at N2333. Residues 2484 to 2549 (TCDYTEWSEW…EKCDWMPVCP (66 aa)) enclose the TSP type-1 2 domain. 3 disulfides stabilise this stretch: C2485–C2528, C2496–C2500, and C2542–C2548. The tract at residues 2552-2587 (EGEEEDDATGGVEPRGEPIVPPWSPERPTDENNQAM) is disordered. N2706 is a glycosylation site (N-linked (GlcNAc...) asparagine). Residues 2709–2729 (TWVICLLLGVGGGICFVLSCV) form a helical membrane-spanning segment. Residues N2751, N2768, and N2793 are each glycosylated (N-linked (GlcNAc...) asparagine). The segment at 2759–2846 (ESHKLRRQGN…IGQTSPTQQR (88 aa)) is disordered. Acidic residues predominate over residues 2801 to 2815 (PEEEPWQFEDRDEEP). The span at 2837–2846 (IGQTSPTQQR) shows a compositional bias: polar residues.

In terms of assembly, component of a complex, at least composed of cysteine repeat modular protein A (CRMPa), cysteine repeat modular protein B (CRMPb), micronemal protein 15 (MIC15) and thrombospondin type 1 domain-containing protein (TSP1).

The protein resides in the membrane. Functionally, required for rhoptry secretion. Plays a role in host cell invasion. This Toxoplasma gondii protein is Micronemal protein 15.